Consider the following 477-residue polypeptide: Adenylyl cyclase-associated protein 2 (477 aa).

The residue at position 2 (Ala-2) is an N-acetylalanine. Disordered regions lie at residues 224–261 (VLSS…PSRS) and 274–323 (TKGL…KHAP). Residues 230–246 (GLPPPPPPPPPPGPPPL) are compositionally biased toward pro residues. 2 positions are modified to phosphoserine: Ser-301 and Ser-309. Residues 301–320 (SPTKSHTPSPTSPKSYPSQK) are compositionally biased toward low complexity. The C-CAP/cofactor C-like domain occupies 317–455 (PSQKHAPVLE…QDGDYREFPI (139 aa)).

This sequence belongs to the CAP family.

It localises to the cell membrane. In terms of biological role, involved in the regulation of actin polymerization. The protein is Adenylyl cyclase-associated protein 2 (CAP2) of Pongo abelii (Sumatran orangutan).